The sequence spans 185 residues: dCTP deaminase (185 aa).

Residue 107 to 112 (KSTYAR) coordinates dCTP. E133 (proton donor/acceptor) is an active-site residue. DCTP contacts are provided by Q152, Y166, and Q176.

It belongs to the dCTP deaminase family. Homotrimer.

The enzyme catalyses dCTP + H2O + H(+) = dUTP + NH4(+). The protein operates within pyrimidine metabolism; dUMP biosynthesis; dUMP from dCTP (dUTP route): step 1/2. Functionally, catalyzes the deamination of dCTP to dUTP. This Nitratiruptor sp. (strain SB155-2) protein is dCTP deaminase.